The sequence spans 114 residues: Reprimo-like protein (114 aa).

The helical transmembrane segment at 61–81 threads the bilayer; the sequence is VVQIAVLCVLSLTVMFGIFFL.

The protein belongs to the reprimo family.

It is found in the membrane. The polypeptide is Reprimo-like protein (rprml) (Danio rerio (Zebrafish)).